The primary structure comprises 420 residues: Glutamyl-tRNA reductase (420 aa).

Residues 49–52 (TCNR), Ser109, 114–116 (EPQ), and Gln120 contribute to the substrate site. The active-site Nucleophile is the Cys50. 189–194 (GAGETI) lines the NADP(+) pocket.

Belongs to the glutamyl-tRNA reductase family. Homodimer.

It carries out the reaction (S)-4-amino-5-oxopentanoate + tRNA(Glu) + NADP(+) = L-glutamyl-tRNA(Glu) + NADPH + H(+). The protein operates within porphyrin-containing compound metabolism; protoporphyrin-IX biosynthesis; 5-aminolevulinate from L-glutamyl-tRNA(Glu): step 1/2. Functionally, catalyzes the NADPH-dependent reduction of glutamyl-tRNA(Glu) to glutamate 1-semialdehyde (GSA). The sequence is that of Glutamyl-tRNA reductase from Sodalis glossinidius (strain morsitans).